The chain runs to 670 residues: MTGILPTYQRFVNGVPVPSISRRSFRLREKYLIVSVLLTFGIVWLGALFYLPEFKSSNSVNDSVYNVYKRIQKAGPELLMPPPLAQNDVGDFPVIGIAHHGEGGDDPHVIEDRNRLRAKIEEDMGMKVLERPQFDVAPSVSSSRGPSKPPVDAIEEPAVGNNAANKDVSPSGPKAESSDKFVAVALAPGADPEIKHKLETVKKMMLHAWYNYKLYAWGKNELKPMSKRAHLSSVFGAGELGATIVDGLDTLYLMGLNDEFREGRDWVAEHLHINEIDSDLSVFETTIRFVGGLLSCYALTGDTMFRDKAAEVGDALLPAFDTPTGLPYALINPSTKASRQYHWAGPNSILSELGTLHLEFTYLSDVTGRDIYRQKVSRIREVLDQIDKPGDLYPNFINPRTGQWGQRHMSLGALGDSFYEYLLKAWLMSGGADEQARIMFDTAMQAALDKMLRVSPSGLAYLAELKYGRIIEEKMDHLSCFAGGMFALASTTLDNSMSERYMDVAKKLTNTCHESYARSETKLGPEAFRFSNAAEARAQKSNEKVYLLRPETFESYFIMWRLTKQQMYRDWAWEAVQALEKHCRVEGGYTGLVNVYHANPQGDDVQQSFFLAETLKYLYLIFGDDSFLPLDEWVFNTEAHPFPIRGKNPLYRAVDKPVLPEPAHAQNNRI.

Topologically, residues 1–30 (MTGILPTYQRFVNGVPVPSISRRSFRLREK) are cytoplasmic. Residues 31–51 (YLIVSVLLTFGIVWLGALFYL) form a helical; Signal-anchor for type II membrane protein membrane-spanning segment. At 52–670 (PEFKSSNSVN…EPAHAQNNRI (619 aa)) the chain is on the lumenal side. N-linked (GlcNAc...) asparagine glycosylation is present at Asn61. Residues 135–177 (DVAPSVSSSRGPSKPPVDAIEEPAVGNNAANKDVSPSGPKAES) are disordered. A disulfide bridge connects residues Cys480 and Cys512. Glu526 (proton donor) is an active-site residue. Thr637 serves as a coordination point for Ca(2+).

It belongs to the glycosyl hydrolase 47 family. The cofactor is Ca(2+). In terms of processing, N-glycosylated. Contains high mannose-type oligosaccharides.

The protein localises to the golgi apparatus membrane. The enzyme catalyses N(4)-(alpha-D-Man-(1-&gt;2)-alpha-D-Man-(1-&gt;2)-alpha-D-Man-(1-&gt;3)-[alpha-D-Man-(1-&gt;2)-alpha-D-Man-(1-&gt;3)-[alpha-D-Man-(1-&gt;2)-alpha-D-Man-(1-&gt;6)]-alpha-D-Man-(1-&gt;6)]-beta-D-Man-(1-&gt;4)-beta-D-GlcNAc-(1-&gt;4)-beta-D-GlcNAc)-L-asparaginyl-[protein] (N-glucan mannose isomer 9A1,2,3B1,2,3) + 4 H2O = N(4)-(alpha-D-Man-(1-&gt;3)-[alpha-D-Man-(1-&gt;3)-[alpha-D-Man-(1-&gt;6)]-alpha-D-Man-(1-&gt;6)]-beta-D-Man-(1-&gt;4)-beta-D-GlcNAc-(1-&gt;4)-beta-D-GlcNAc)-L-asparaginyl-[protein] (N-glucan mannose isomer 5A1,2) + 4 beta-D-mannose. It carries out the reaction N(4)-(alpha-D-Man-(1-&gt;2)-alpha-D-Man-(1-&gt;2)-alpha-D-Man-(1-&gt;3)-[alpha-D-Man-(1-&gt;3)-[alpha-D-Man-(1-&gt;2)-alpha-D-Man-(1-&gt;6)]-alpha-D-Man-(1-&gt;6)]-beta-D-Man-(1-&gt;4)-beta-D-GlcNAc-(1-&gt;4)-beta-D-GlcNAc)-L-asparaginyl-[protein] (N-glucan mannose isomer 8A1,2,3B1,3) + 3 H2O = N(4)-(alpha-D-Man-(1-&gt;3)-[alpha-D-Man-(1-&gt;3)-[alpha-D-Man-(1-&gt;6)]-alpha-D-Man-(1-&gt;6)]-beta-D-Man-(1-&gt;4)-beta-D-GlcNAc-(1-&gt;4)-beta-D-GlcNAc)-L-asparaginyl-[protein] (N-glucan mannose isomer 5A1,2) + 3 beta-D-mannose. It participates in protein modification; protein glycosylation. Its activity is regulated as follows. Strongly inhibited by 1-deoxymannojirimycin, an inhibitor of class I alpha-mannosidases, and by EDTA. EDTA inhibition is reversed by the addition of calcium, but not of magnesium. Its function is as follows. Involved in the maturation of Asn-linked oligosaccharides. Converts Man(9)GlcNAc(2) to Man(5)GlcNAc(2) primarily through the Man(7)GlcNAc(2) isomer C processing intermediate. This is Mannosyl-oligosaccharide alpha-1,2-mannosidase IA from Spodoptera frugiperda (Fall armyworm).